A 410-amino-acid polypeptide reads, in one-letter code: MKKWKDIHPISWTIIIGTIFGRMATSMSIPFLAIYLTAVQGASASYAGLVIAASSSVGILASFYGGYISDKFGRKNMMLVSIFGWMLVFAGFAAASNLWVFFVVNALNGLCKSLFEPASKALLSDMTEEKTRLLVFNLRYAAINIGVVFGPVLGLYFGSSQSTTPFLVPAVIYGLYGIVLALQFKKHPSLSAPAQSRNMSVREAFMVTQKDYLFTIALVGITLCTFGYSQFSSTFPQYMAQNPLIGNGTKLYGLMLTLNAIVVLATQFPIVHFAKRFSPLCSLMLGNVMVSISMAIFTVSHGVPSIVMIVITFTIGEVLLFSMMDLYVDQIAKPGLKGTYFGAIGFSQLGNVIGPWVGGICIDLFGAGRPIYIFSVLSGITLLGLPFLAFAYRQMKMETTKHRSRLEKPL.

The next 11 helical transmembrane spans lie at 14-34 (IIIG…FLAI), 48-68 (GLVI…GGYI), 82-102 (IFGW…WVFF), 140-160 (YAAI…FGSS), 164-184 (TPFL…ALQF), 212-232 (YLFT…SQFS), 251-271 (LYGL…FPIV), 279-299 (PLCS…IFTV), 303-323 (VPSI…LFSM), 342-362 (GAIG…GICI), and 371-391 (IYIF…LAFA).

This sequence belongs to the major facilitator superfamily. TCR/Tet family.

The protein resides in the cell membrane. This is an uncharacterized protein from Bacillus subtilis (strain 168).